An 817-amino-acid chain; its full sequence is Leucine--tRNA ligase (817 aa).

Positions 51-61 (PYPSGDLHVGH) match the 'HIGH' region motif. A 'KMSKS' region motif is present at residues 588–592 (RMSKS). Residue K591 participates in ATP binding.

This sequence belongs to the class-I aminoacyl-tRNA synthetase family.

It is found in the cytoplasm. It carries out the reaction tRNA(Leu) + L-leucine + ATP = L-leucyl-tRNA(Leu) + AMP + diphosphate. The polypeptide is Leucine--tRNA ligase (Rubrobacter xylanophilus (strain DSM 9941 / JCM 11954 / NBRC 16129 / PRD-1)).